The sequence spans 229 residues: Potassium/proton antiporter CemA (229 aa).

4 helical membrane-spanning segments follow: residues 7-27 (LASLPYLVSIIFLPWWVSLSF), 106-126 (IILHFSTNLICFAILSGYFFL), 154-174 (ILLVTDLWIGFHSTHGWELMI), and 189-209 (IISGLVSTFPVILDTIVKYWI).

This sequence belongs to the CemA family.

It localises to the plastid. Its subcellular location is the chloroplast inner membrane. The catalysed reaction is K(+)(in) + H(+)(out) = K(+)(out) + H(+)(in). In terms of biological role, contributes to K(+)/H(+) antiport activity by supporting proton efflux to control proton extrusion and homeostasis in chloroplasts in a light-dependent manner to modulate photosynthesis. Prevents excessive induction of non-photochemical quenching (NPQ) under continuous-light conditions. Indirectly promotes efficient inorganic carbon uptake into chloroplasts. The sequence is that of Potassium/proton antiporter CemA from Phalaenopsis aphrodite subsp. formosana (Moth orchid).